Consider the following 227-residue polypeptide: Thymidine kinase 1 (227 aa).

ATP-binding positions include 15–22 (GPMFSGKT), 47–49 (DTR), and 91–94 (DEGQ). E92 (proton acceptor) is an active-site residue. F122 contributes to the substrate binding site. Zn(2+) contacts are provided by C147 and C150. Residues 166 to 170 (IELIG) and Y175 contribute to the substrate site. The Zn(2+) site is built by C179 and C182. Polar residues predominate over residues 187–196 (QNEGNSTKPS). The tract at residues 187–227 (QNEGNSTKPSKTARHSHSQSAPSVAPLAVNINPDDHLNNDY) is disordered.

The protein belongs to the thymidine kinase family. In terms of assembly, interacts with calmodulin in the presence of Ca(2+).

The catalysed reaction is thymidine + ATP = dTMP + ADP + H(+). The sequence is that of Thymidine kinase 1 from Dictyostelium discoideum (Social amoeba).